A 464-amino-acid polypeptide reads, in one-letter code: Argininosuccinate lyase (464 aa).

The protein belongs to the lyase 1 family. Argininosuccinate lyase subfamily.

The protein localises to the cytoplasm. It carries out the reaction 2-(N(omega)-L-arginino)succinate = fumarate + L-arginine. Its pathway is amino-acid biosynthesis; L-arginine biosynthesis; L-arginine from L-ornithine and carbamoyl phosphate: step 3/3. This chain is Argininosuccinate lyase, found in Sulfurovum sp. (strain NBC37-1).